Reading from the N-terminus, the 488-residue chain is MNVLNEKSLTVRGKDRYKSGVMSYKKMGYWEPDYTPKDTDIICLFRVTPQDGVDPIEAAAAVAGESSTATWTVVWTDRLTAAEKYRAKCYRVDPVPGAEGQYFAYIAYDLDLFESGSISNLTASVIGNVFGFKPLKALRLEDMRLPVAYVKTFKGPPTGIVVERERLDKFGRPLLGATVKPKLGLSGRNYGRVVYEALKGGLDFTKDDENINSQPFMHWRERFLYCMEAVNRAQAATGEVKGSYLNVTAATMEDMYERAEFAKELGSVVVMIDLVIGYTAIQSMSNWARKNDMILHLHRAGHSTYTRQRNHGVSFRVISKWMRLAGVDHIHAGTVVGKLEGDPLTTRGYYDICREEHNPMQLEHGIFFDQNWASLNKMMPVASGGIHAGQMHQLIQHLGEDVVLQFGGGTIGHPMGIQAGAIANRVALEAMILARNEGRDYVSEGPDILAKAAASCTPLKQALEVWKDVTFNYQSTDAPDYVTTPAVA.

Residues N128 and T178 each contribute to the substrate site. Residue K180 is the Proton acceptor of the active site. K182 contacts substrate. Mg(2+)-binding residues include K206, D208, and E209. K206 is subject to N6-carboxylysine. The Proton acceptor role is filled by H298. Positions 299, 331, and 383 each coordinate substrate.

The protein belongs to the RuBisCO large chain family. Type I subfamily. Heterohexadecamer of 8 large chains and 8 small chains. Mg(2+) is required as a cofactor.

It catalyses the reaction 2 (2R)-3-phosphoglycerate + 2 H(+) = D-ribulose 1,5-bisphosphate + CO2 + H2O. The enzyme catalyses D-ribulose 1,5-bisphosphate + O2 = 2-phosphoglycolate + (2R)-3-phosphoglycerate + 2 H(+). In terms of biological role, ruBisCO catalyzes two reactions: the carboxylation of D-ribulose 1,5-bisphosphate, the primary event in carbon dioxide fixation, as well as the oxidative fragmentation of the pentose substrate. Both reactions occur simultaneously and in competition at the same active site. In Nitrobacter hamburgensis (strain DSM 10229 / NCIMB 13809 / X14), this protein is Ribulose bisphosphate carboxylase large chain 1.